The chain runs to 626 residues: Myelin-associated glycoprotein (626 aa).

The N-terminal stretch at 1–19 is a signal peptide; the sequence is MIFLTALPLFWIMISASRG. An interaction with RTN4R and RTN4RL2 region spans residues 20-325; it reads GHWGAWMPSS…RTVGLSVMYA (306 aa). Residues 20–516 are Extracellular-facing; it reads GHWGAWMPSS…HRLMWAKIGP (497 aa). The Ig-like V-type domain maps to 22–120; that stretch reads WGAWMPSSIS…LGGKYYFRGD (99 aa). 3 disulfides stabilise this stretch: Cys-37–Cys-165, Cys-42–Cys-100, and Cys-159–Cys-217. 65–67 provides a ligand contact to a ganglioside GT1b (d18:1(4E)); it reads YPK. Asn-99 carries an N-linked (GlcNAc...) asparagine glycan. Asn-106 is a glycosylation site (N-linked (GlcNAc...) asparagine; partial). A ganglioside GT1b (d18:1(4E)) is bound by residues Arg-118 and 124 to 128; that span reads YNQYT. 4 consecutive Ig-like C2-type domains span residues 139–237, 241–325, 327–412, and 413–508; these read NTPN…MDVK, VIVE…VMYA, WKPT…VEFA, and PVLL…GAHR. 2 N-linked (GlcNAc...) asparagine glycosylation sites follow: Asn-223 and Asn-246. Cys-261 and Cys-305 are oxidised to a cystine. Asn-315 carries N-linked (GlcNAc...) asparagine glycosylation. An intrachain disulfide couples Cys-347 to Cys-392. A glycan (N-linked (GlcNAc...) asparagine) is linked at Asn-406. 2 disulfides stabilise this stretch: Cys-421/Cys-430 and Cys-432/Cys-488. N-linked (GlcNAc...) asparagine glycans are attached at residues Asn-450 and Asn-454. The chain crosses the membrane as a helical span at residues 517–536; sequence VGAVVAFAILIAIVCYITQT. The S-palmitoyl cysteine moiety is linked to residue Cys-531. At 537 to 626 the chain is on the cytoplasmic side; the sequence is RRKKNVTESP…LAEYAEIRVK (90 aa). Ser-545, Ser-547, and Ser-549 each carry phosphoserine. The interval 577 to 626 is required for normal axon myelination in the central nervous system; sequence LGSERRLLGLRGEPPELDLSYSHSDLGKRPTKDSYTLTEELAEYAEIRVK. The tract at residues 582–608 is disordered; sequence RLLGLRGEPPELDLSYSHSDLGKRPTK.

It belongs to the immunoglobulin superfamily. SIGLEC (sialic acid binding Ig-like lectin) family. In terms of assembly, monomer and homodimer. Interacts (via the first three N-terminal Ig-like domains) with RTN4R and RTN4RL2. Interacts with RTN4R. Interacts with isoform 2 of BSG. In terms of processing, N-glycosylated. Post-translationally, phosphorylated on tyrosine residues. Ubiquitinated, leading to proteasomal degradation. As to expression, both isoform 1 and isoform 2 are detected in myelinated structures in the central and peripheral nervous system, in periaxonal myelin and at Schmidt-Lanterman incisures. Detected in optic nerve, in oligodendroglia and in periaxonal myelin sheaths. Detected in compact myelin (at protein level). Both isoform 1 and isoform 2 are detected in the central and peripheral nervous system.

The protein resides in the cell membrane. Its subcellular location is the membrane raft. Adhesion molecule that mediates interactions between myelinating cells and neurons by binding to neuronal sialic acid-containing gangliosides and to the glycoproteins RTN4R and RTN4RL2. Not required for initial myelination, but seems to play a role in the maintenance of normal axon myelination. Protects motoneurons against apoptosis, also after injury; protection against apoptosis is probably mediated via interaction with neuronal RTN4R and RTN4RL2. Required to prevent degeneration of myelinated axons in adults; this probably depends on binding to gangliosides on the axon cell membrane. Negative regulator of neurite outgrowth; in dorsal root ganglion neurons the inhibition is mediated primarily via binding to neuronal RTN4R or RTN4RL2 and to a lesser degree via binding to neuronal gangliosides. In cerebellar granule cells the inhibition is mediated primarily via binding to neuronal gangliosides. In sensory neurons, inhibition of neurite extension depends only partially on RTN4R, RTN4RL2 and gangliosides. Inhibits axon longitudinal growth. Inhibits axon outgrowth by binding to RTN4R. Preferentially binds to alpha-2,3-linked sialic acid. Binds ganglioside Gt1b. The sequence is that of Myelin-associated glycoprotein (MAG) from Homo sapiens (Human).